Consider the following 219-residue polypeptide: Uracil-DNA glycosylase (219 aa).

Aspartate 61 (proton acceptor) is an active-site residue.

Belongs to the uracil-DNA glycosylase (UDG) superfamily. UNG family.

Its subcellular location is the cytoplasm. The catalysed reaction is Hydrolyzes single-stranded DNA or mismatched double-stranded DNA and polynucleotides, releasing free uracil.. Excises uracil residues from the DNA which can arise as a result of misincorporation of dUMP residues by DNA polymerase or due to deamination of cytosine. This chain is Uracil-DNA glycosylase, found in Neisseria gonorrhoeae (strain ATCC 700825 / FA 1090).